We begin with the raw amino-acid sequence, 262 residues long: Proline-rich protein 23C (262 aa).

Disordered regions lie at residues 1–52 and 225–262; these read MGSR…AGTP and VPSS…LFQE. A compositionally biased stretch (pro residues) spans 226-242; the sequence is PSSPLQPLPPSPSPGPH. Residues 243-252 are compositionally biased toward basic and acidic residues; sequence ARPELPERPP. Basic residues predominate over residues 253 to 262; it reads CKVRRRLFQE.

Belongs to the PRR23 family.

The sequence is that of Proline-rich protein 23C (PRR23C) from Homo sapiens (Human).